A 140-amino-acid polypeptide reads, in one-letter code: Heavy metal-associated isoprenylated plant protein 31 (140 aa).

The HMA domain occupies 3–67 (MTVEIRVPNL…AVRRAGKAAE (65 aa)). Residues C14 and C17 each coordinate a metal cation. C137 bears the Cysteine methyl ester mark. A lipid anchor (S-farnesyl cysteine) is attached at C137. A propeptide spans 138-140 (TIM) (removed in mature form).

Belongs to the HIPP family.

In terms of biological role, heavy-metal-binding protein. This is Heavy metal-associated isoprenylated plant protein 31 from Arabidopsis thaliana (Mouse-ear cress).